A 101-amino-acid chain; its full sequence is Olivetolic acid cyclase (101 aa).

The Stress-response A/B barrel domain maps to 3-97; sequence VKHLIVLKFK…FWEKLLIFDY (95 aa). Histidine 5 contacts 3,5,7-trioxododecanoyl-CoA. Mg(2+) is bound by residues valine 31, isoleucine 34, and methionine 37. Residue tyrosine 72 participates in 3,5,7-trioxododecanoyl-CoA binding. Catalysis depends on acid/base catalyst residues tyrosine 72 and histidine 75.

In terms of assembly, homodimer. Expressed in glandular trichomes and at lower levels in female flowers.

The protein resides in the cytoplasm. It carries out the reaction 3,5,7-trioxododecanoyl-CoA = olivetolate + CoA + H(+). It participates in secondary metabolite biosynthesis; terpenoid biosynthesis. In terms of biological role, involved in the biosynthesis of cannabinoids-related terpenophenolic natural products, which have pharmacological activity. Polyketide cyclase which functions in concert with OLS/TKS to form olivetolic acid. Has no intrinsic polyketide synthase activity and requires the presence of OLS to produce olivetolic acid. The chain is Olivetolic acid cyclase from Cannabis sativa (Hemp).